A 152-amino-acid chain; its full sequence is Large ribosomal subunit protein bL9 (152 aa).

The protein belongs to the bacterial ribosomal protein bL9 family.

Its function is as follows. Binds to the 23S rRNA. The sequence is that of Large ribosomal subunit protein bL9 from Prochlorococcus marinus (strain NATL1A).